The following is a 200-amino-acid chain: Recombination protein RecR (200 aa).

A C4-type zinc finger spans residues 57–72 (CNECRTFTEEDVCHIC). Residues 81-176 (GLLCVVESPA…DASRIAHGVP (96 aa)) enclose the Toprim domain.

It belongs to the RecR family.

Functionally, may play a role in DNA repair. It seems to be involved in an RecBC-independent recombinational process of DNA repair. It may act with RecF and RecO. The protein is Recombination protein RecR of Vibrio vulnificus (strain CMCP6).